A 359-amino-acid chain; its full sequence is 4-galactosyl-N-acetylglucosaminide 3-alpha-L-fucosyltransferase FUT6 (359 aa).

The Cytoplasmic segment spans residues 1 to 14 (MDPLGPAKPQWSWR). A helical; Signal-anchor for type II membrane protein membrane pass occupies residues 15-34 (CCLTTLLFQLLVAVCFFSYL). Over 35–359 (RVSRDDPTVY…QTRSIAAWFT (325 aa)) the chain is Lumenal. N-linked (GlcNAc...) asparagine glycans are attached at residues Asn46, Asn91, Asn153, and Asn184. Residues 73–112 (KPIALPRCSEMVPGTADCNITADRKVYPQADAVIVHHREV) are determines site-specific fucosylation.

This sequence belongs to the glycosyltransferase 10 family. As to quaternary structure, homodimer and monomer. Monomer (secreted form). Post-translationally, N-glycosylated. Proteolytic cleavage releases a secreted glycoform of 43 kDa.

It localises to the golgi apparatus. Its subcellular location is the golgi stack membrane. The protein localises to the secreted. It catalyses the reaction a beta-D-galactosyl-(1-&gt;4)-N-acetyl-beta-D-glucosaminyl derivative + GDP-beta-L-fucose = a beta-D-galactosyl-(1-&gt;4)-[alpha-L-fucosyl-(1-&gt;3)]-N-acetyl-beta-D-glucosaminyl derivative + GDP + H(+). The enzyme catalyses an N-acetyl-alpha-neuraminyl-(2-&gt;3)-beta-D-galactosyl-(1-&gt;4)-N-acetyl-beta-D-glucosaminyl derivative + GDP-beta-L-fucose = an alpha-Neu5Ac-(2-&gt;3)-beta-D-Gal-(1-&gt;4)-[alpha-L-Fuc-(1-&gt;3)]-beta-D-GlcNAc derivative + GDP + H(+). The catalysed reaction is an alpha-Neu5Ac-(2-&gt;3)-beta-D-Gal-(1-&gt;4)-beta-D-GlcNAc-(1-&gt;3)-beta-D-Gal-(1-&gt;4)-[alpha-L-Fuc-(1-&gt;3)]-beta-D-GlcNAc derivative + GDP-beta-L-fucose = an alpha-Neu5Ac-(2-&gt;3)-beta-D-Gal-(1-&gt;4)-[alpha-L-Fuc-(1-&gt;3)]-beta-D-GlcNAc-(1-&gt;3)-beta-D-Gal-(1-&gt;4)-[alpha-L-Fuc-(1-&gt;3)]-beta-D-GlcNAc derivative + GDP + H(+). It carries out the reaction a neolactoside nLc6Cer + GDP-beta-L-fucose = beta-D-Gal-(1-&gt;4)-[alpha-L-Fuc-(1-&gt;3)]-beta-D-GlcNAc-(1-&gt;3)-beta-D-Gal-(1-&gt;4)-beta-D-GlcNAc-(1-&gt;3)-beta-D-Gal-(1-&gt;4)-beta-D-Glc-(1&lt;-&gt;1')-Cer + GDP + H(+). It catalyses the reaction a neolactoside nLc6Cer + GDP-beta-L-fucose = beta-D-galactosyl-(1-&gt;4)-N-acetyl-beta-D-glucosaminyl-(1-&gt;3)-beta-D-galactosyl-(1-&gt;4)-[alpha-L-fucosyl-(1-&gt;3)]-N-acetyl-beta-D-glucosaminyl-(1-&gt;3)-beta-D-galactosyl-(1-&gt;4)-beta-D-glucosyl-(1&lt;-&gt;1')-ceramide + GDP + H(+). The enzyme catalyses a neolactoside VI(3)-alpha-NeuNAc-nLc6Cer + GDP-beta-L-fucose = a neolactoside VI(3)-alpha-NeuAc,V(3)-alphaFuc-nLc6Cer + GDP + H(+). The catalysed reaction is beta-D-galactosyl-(1-&gt;4)-N-acetyl-D-glucosamine + GDP-beta-L-fucose = beta-D-galactosyl-(1-&gt;4)-[alpha-L-fucosyl-(1-&gt;3)]-N-acetyl-D-glucosamine + GDP + H(+). It carries out the reaction N-acetyl-alpha-neuraminosyl-(2-&gt;3)-beta-D-galactosyl-(1-&gt;4)-N-acetyl-beta-D-glucosamine + GDP-beta-L-fucose = N-acetyl-alpha-neuraminosyl-(2-&gt;3)-beta-D-galactosyl-(1-&gt;4)-[alpha-L-fucosyl-(1-&gt;3)]-N-acetyl-beta-D-glucosamine + GDP + H(+). It catalyses the reaction lactose + GDP-beta-L-fucose = beta-D-galactosyl-(1-&gt;4)-[alpha-L-fucosyl-(1-&gt;3)]-D-glucose + GDP + H(+). The enzyme catalyses alpha-L-Fuc-(1-&gt;2)-beta-D-Gal-(1-&gt;4)-D-Glc + GDP-beta-L-fucose = alpha-L-Fuc-(1-&gt;2)-beta-D-Gal-(1-&gt;4)-[alpha-L-Fuc-(1-&gt;3)]-D-Glc + GDP + H(+). The catalysed reaction is a beta-D-galactosyl-(1-&gt;4)-N-acetyl-beta-D-6-sulfooxy-glucosaminyl derivative + GDP-beta-L-fucose = a beta-D-galactosyl-(1-&gt;4)-[alpha-L-fucosyl-(1-&gt;3)]-N-acetyl-beta-D-6-sulfooxy-glucosaminyl derivative + GDP + H(+). It functions in the pathway protein modification; protein glycosylation. Functionally, catalyzes the transfer of L-fucose, from a guanosine diphosphate-beta-L-fucose, to the N-acetyl glucosamine (GlcNAc) of a distal alpha2,3 sialylated lactosamine unit of a glycoprotein- or glycolipid-linked sialopolylactosamines chain or of a distal or internal lactosamine unit of a neutral glycoprotein- or glycolipid-linked polylactosamines chain through an alpha-1,3 glycosidic linkage and participates in surface expression of the sialyl Lewis X (sLe(x)), Lewis X (Le(x)) and non sialylated VIM2 determinants. Moreover transfers fucose to H-type 2 (Fucalpha1-2Galbeta1-4GlcNAc) chain acceptor substrates and participates in difucosylated sialyl Lewis x determinants. Also fucosylates a polylactosamine substrate having a 6 sulfate modification at the GlcNAc moiety and gives rise to sialyl and non-sialyl 6-sulfo lewis X. Does not have activity towards type 1 ((Galbeta1-3GlcNAc)) and H-type 1 chain (Fucalpha1-2Galbeta1-3GlcNAc) acceptors substrates. The polypeptide is 4-galactosyl-N-acetylglucosaminide 3-alpha-L-fucosyltransferase FUT6 (Pan troglodytes (Chimpanzee)).